Consider the following 157-residue polypeptide: Endoribonuclease YbeY (157 aa).

Positions 114, 118, and 124 each coordinate Zn(2+).

Belongs to the endoribonuclease YbeY family. It depends on Zn(2+) as a cofactor.

It localises to the cytoplasm. In terms of biological role, single strand-specific metallo-endoribonuclease involved in late-stage 70S ribosome quality control and in maturation of the 3' terminus of the 16S rRNA. The protein is Endoribonuclease YbeY of Klebsiella pneumoniae (strain 342).